The primary structure comprises 187 residues: DNA-directed RNA polymerase subunit Rpo7 (187 aa).

Residues 82-166 (YELIEGEVVD…RGSKIALTMR (85 aa)) form the S1 motif domain.

Belongs to the eukaryotic RPB7/RPC8 RNA polymerase subunit family. Part of the RNA polymerase complex. Forms a stalk with Rpo4 that extends from the main structure.

The protein resides in the cytoplasm. It carries out the reaction RNA(n) + a ribonucleoside 5'-triphosphate = RNA(n+1) + diphosphate. Functionally, DNA-dependent RNA polymerase (RNAP) catalyzes the transcription of DNA into RNA using the four ribonucleoside triphosphates as substrates. This is DNA-directed RNA polymerase subunit Rpo7 from Methanocaldococcus jannaschii (strain ATCC 43067 / DSM 2661 / JAL-1 / JCM 10045 / NBRC 100440) (Methanococcus jannaschii).